Consider the following 290-residue polypeptide: 7-methylguanosine phosphate-specific 5'-nucleotidase B (290 aa).

Catalysis depends on Asp-39, which acts as the Nucleophile. The Mg(2+) site is built by Asp-39 and Asp-41. Asp-41 acts as the Proton donor in catalysis. Position 86 (Glu-86) interacts with CMP. Glu-86 contributes to the N(7)-methyl-GMP binding site. Residues 154 to 155 (SA) and Lys-203 each bind substrate. Asp-228 contributes to the Mg(2+) binding site.

Belongs to the pyrimidine 5'-nucleotidase family. Monomer.

Its subcellular location is the cytoplasm. The catalysed reaction is N(7)-methyl-GMP + H2O = N(7)-methylguanosine + phosphate. The enzyme catalyses CMP + H2O = cytidine + phosphate. It catalyses the reaction a ribonucleoside 5'-phosphate + H2O = a ribonucleoside + phosphate. Specifically hydrolyzes 7-methylguanosine monophosphate (m(7)GMP) to 7-methylguanosine and inorganic phosphate. The specific activity for m(7)GMP may protect cells against undesired salvage of m(7)GMP and its incorporation into nucleic acids. Also has weak activity for CMP. UMP and purine nucleotides are poor substrates. In Xenopus laevis (African clawed frog), this protein is 7-methylguanosine phosphate-specific 5'-nucleotidase B (Nt5c3b-b).